A 289-amino-acid polypeptide reads, in one-letter code: Ribosomal RNA small subunit methyltransferase A (289 aa).

S-adenosyl-L-methionine-binding residues include N28, L30, G55, E77, D103, and N122.

It belongs to the class I-like SAM-binding methyltransferase superfamily. rRNA adenine N(6)-methyltransferase family. RsmA subfamily.

Its subcellular location is the cytoplasm. It carries out the reaction adenosine(1518)/adenosine(1519) in 16S rRNA + 4 S-adenosyl-L-methionine = N(6)-dimethyladenosine(1518)/N(6)-dimethyladenosine(1519) in 16S rRNA + 4 S-adenosyl-L-homocysteine + 4 H(+). In terms of biological role, specifically dimethylates two adjacent adenosines (A1518 and A1519) in the loop of a conserved hairpin near the 3'-end of 16S rRNA in the 30S particle. May play a critical role in biogenesis of 30S subunits. This is Ribosomal RNA small subunit methyltransferase A from Jannaschia sp. (strain CCS1).